The primary structure comprises 657 residues: L-glutamate oxidase precursor (657 aa).

A signal peptide spans Met-1 to Arg-12. FAD is bound by residues Glu-86, Ala-87, Arg-95, Met-120, Arg-121, Met-350, Glu-639, Trp-647, and Ile-648.

This sequence belongs to the flavin monoamine oxidase family. LGOX subfamily. The mature enzyme is a heterohexamer composed of 2 alpha chains, 2 beta chains and 2 gamma chains (alpha2beta2gamma2). The cofactor is FAD. The precursor form is proteolytically cleaved by an endopeptidase into alpha, beta and gamma chains, which form the stable mature enzyme.

It localises to the secreted. It catalyses the reaction L-glutamate + O2 + H2O = H2O2 + 2-oxoglutarate + NH4(+). With respect to regulation, proteinase K-treated enzyme exhibits improved affinity for the substrate, increased activity and increased thermostability. Catalyzes the oxidative deamination of L-glutamate to 2-ketoglutarate along with the production of ammonia and hydrogen peroxide. Exhibits strict specificity for L-glutamate, and shows only very weak activity with L-glutamine. This chain is L-glutamate oxidase precursor, found in Streptomyces diastatochromogenes.